Reading from the N-terminus, the 83-residue chain is UPF0512 protein G (83 aa).

It belongs to the UPF0512 family.

This Dictyostelium discoideum (Social amoeba) protein is UPF0512 protein G.